The following is a 490-amino-acid chain: Probable G-protein coupled receptor npr-8 (490 aa).

The Extracellular segment spans residues 1-55; it reads MEVKDIDNYCDRGISPNASNYLTYPFDGLCLQKFFYQLQTSLRRFTPYEEIIYTT. Asparagine 17 carries N-linked (GlcNAc...) asparagine glycosylation. A helical membrane pass occupies residues 56 to 76; the sequence is VYIIISVAAVIGNGLVIMAVV. Over 77 to 86 the chain is Cytoplasmic; sequence RKKTMRTNRN. A helical membrane pass occupies residues 87 to 107; it reads VLILNLALSNLILAITNIPFL. Topologically, residues 108-125 are extracellular; sequence WLPSIDFEFPYSRFFCKF. A helical membrane pass occupies residues 126–146; it reads ANVLPGSNIYCSTLTISVMAI. The Cytoplasmic segment spans residues 147–166; it reads DRYYSVKKLKIASNRKQCFH. Residues 167–187 traverse the membrane as a helical segment; that stretch reads AVLVSLAIWIVSFILSLPLLL. Residues 188-236 lie on the Extracellular side of the membrane; the sequence is YYETSMLYVMREIRVVDQSGQEVIRSYGWRQCRLVSAGRLPDITQSIQL. Residues 237 to 257 form a helical membrane-spanning segment; it reads LMSILQVAFLYIVPLFVLSIF. Residues 258–331 are Cytoplasmic-facing; sequence NVKLTRFLKT…QRTNRTTSLL (74 aa). Residues 272–322 form a disordered region; sequence MSKTRAPPKRFDRSDSHHNSLKNNNNHTSSLRSPSMPSIRSSITERNKTNQ. Residues 280–289 show a composition bias toward basic and acidic residues; sequence KRFDRSDSHH. Low complexity predominate over residues 292 to 313; that stretch reads LKNNNNHTSSLRSPSMPSIRSS. The chain crosses the membrane as a helical span at residues 332–352; it reads IAMAGSYAALWFPFTLITFLI. Topologically, residues 353–374 are extracellular; that stretch reads DFELIINQDYVNLVERIDQTCK. Residues 375-395 traverse the membrane as a helical segment; it reads MVSMLSICVNPFLYGFLNTNF. The Cytoplasmic portion of the chain corresponds to 396–490; that stretch reads RHEFSDIYYR…DDDIEKDSFV (95 aa).

It belongs to the G-protein coupled receptor 1 family.

Its subcellular location is the cell membrane. Not known. Putative receptor. The chain is Probable G-protein coupled receptor npr-8 from Caenorhabditis elegans.